The sequence spans 272 residues: 3-methyl-2-oxobutanoate hydroxymethyltransferase (272 aa).

Residues D43 and D82 each contribute to the Mg(2+) site. 3-methyl-2-oxobutanoate contacts are provided by residues 43–44 (DS), D82, and K112. Mg(2+) is bound at residue E114. The active-site Proton acceptor is E179.

It belongs to the PanB family. Homodecamer; pentamer of dimers. Requires Mg(2+) as cofactor.

It is found in the cytoplasm. It catalyses the reaction 3-methyl-2-oxobutanoate + (6R)-5,10-methylene-5,6,7,8-tetrahydrofolate + H2O = 2-dehydropantoate + (6S)-5,6,7,8-tetrahydrofolate. It functions in the pathway cofactor biosynthesis; (R)-pantothenate biosynthesis; (R)-pantoate from 3-methyl-2-oxobutanoate: step 1/2. Its function is as follows. Catalyzes the reversible reaction in which hydroxymethyl group from 5,10-methylenetetrahydrofolate is transferred onto alpha-ketoisovalerate to form ketopantoate. The protein is 3-methyl-2-oxobutanoate hydroxymethyltransferase of Staphylococcus aureus (strain Mu3 / ATCC 700698).